Here is a 426-residue protein sequence, read N- to C-terminus: MSKSENLYHAARELIPGGVNSPVRAFTGVGGTPLFIERADGAYLYDVDGKAYIDYVGSWGPMVLGHNHPAIRNAVIEAASRGLSFGAPTEMEVKMAELVTELVPTMDMVRMVNSGTEATMSAIRLARGFTGRDKIIKFEGCYHGHADCLLVKAGSGALTLGQPNSPGVPADFAKHTLTCTYNDLASVRAAFEQYPQDIACIIVEPVAGNMNCIPPQPEFLPGLRALCDEFGALLIIDEVMTGFRVALAGAQAYYGVEPDLTCLGKIIGGGMPVGAFGGRREVMDALAPTGPVYQAGTLSGNPIAMAAGFACLSEVAQPGVHETLTELTNQLADGLLNAARETGIPLVVNNVGGMFGIFFTDAETVTCYQDVVKCDVERFKRFFHLMLEEGVYLAPSAFEAGFMSIAHSEEDINNTIDAARRVFAKL.

N6-(pyridoxal phosphate)lysine is present on lysine 265.

It belongs to the class-III pyridoxal-phosphate-dependent aminotransferase family. HemL subfamily. Homodimer. Pyridoxal 5'-phosphate serves as cofactor.

It localises to the cytoplasm. The catalysed reaction is (S)-4-amino-5-oxopentanoate = 5-aminolevulinate. The protein operates within porphyrin-containing compound metabolism; protoporphyrin-IX biosynthesis; 5-aminolevulinate from L-glutamyl-tRNA(Glu): step 2/2. The polypeptide is Glutamate-1-semialdehyde 2,1-aminomutase (Klebsiella pneumoniae (strain 342)).